A 541-amino-acid chain; its full sequence is Forkhead box protein O (541 aa).

Residues 118–150 show a composition bias toward polar residues; it reads NEQCGQLGGASSNGSTAMLHTPDGSNSHQTSFP. Disordered regions lie at residues 118 to 168 and 252 to 291; these read NEQC…GKKT and WVINPDAKPGRNPRRTRERSNTIETTTKAQLEKSRRGAKK. A DNA-binding region (fork-head) is located at residues 175-268; the sequence is WGNMSYAELI…KPGRNPRRTR (94 aa). Residue Thr-273 is modified to Phosphothreonine. Ser-319 bears the Phosphoserine; by CaMK2 mark.

As to quaternary structure, interacts with rle-1. Interacts with unc-43 and tax-6. Interacts with jnk-1. Interacts with ftt-2. Interacts with prmt-1. Interacts with hcf-1. In terms of processing, phosphorylated by akt-1 and/or akt-2. Phosphorylated by sgk-1. Phosphorylated by unc-43. Phosphorylated by jnk-1. Dephosphorylated by tax-6 in vitro. Post-translationally, ubiquitinated. Ubiquitination by rle-1 leads to proteasome-mediated degradation. Methylation by prmt-1 prevents phosphorylation and promotes translocation to the nucleus to allow for daf-16-dependent transcription. In terms of tissue distribution, isoform b and isoform c are expressed in ectoderm, muscles, intestine and neurons. Isoform b is also expressed in the pharynx. The intestine appears to be the primary site of longevity function.

The protein localises to the nucleus. The protein resides in the cytoplasm. In terms of biological role, forkhead-type transcription factor. Binds to the promoters of genes that contain the daf-16/FOXO binding element (DBE), TTGTTTAC, in their regulatory region. Functions in the Insulin/IGF-1-like signaling (IIS) mediated pathway which affects lipogenesis, lifespan, starvation survival, heat shock and oxidative stress responses, sleep, associative memory, and dauer formation. Longevity signaling predominantly arises from expression in the intestine. Acts in the intestine to mediate the role of slo-1 in age-associated decline in motor activity and longevity. Transcriptional activity of daf-16/FOXO is negatively regulated by interaction with host cell factor homolog hcf-1; and by cytoplasmic sequestration by association with ftt-2. Inhibition is required for the carbon dioxide (CO2) avoidance response. Upon loss of inhibition, daf-16 translocates to the nucleus to regulate genes that result in delayed reproduction and growth while increasing stress resistance starvation tolerance and longevity. Association with arginine methyltransferase prmt-1 prevents phosphorylation and allows for translocation to the nucleus and the subsequent transcription of longevity-related genes. Modulation of its activity by cGMP levels in sensory neurons regulates lifespan. Has a protective role against muscle dystrophy. Involved in mediating protection against aberrant protein aggregation proteotoxicity. Influences transcription of genes that code for proteins involved in immunity as part of a general stress response. Targets genes that inhibit and stimulate tumor growth. Targets kinases, phosphatases and transcription factors that are primarily involved in signaling and gene regulation. Thought to regulate ins-7 in FOXO-to-FOXO signaling, which coordinates daf-16 expression. Activity is positively regulated by shc-1-mediated inhibition of daf-2 and activation of JNK pathway. Through the regulation of its activity by shc-1-mediated inhibition of daf-2 and activation of JNK pathway, plays a role in maintaining the integrity of the gonad. Functions by indirect interaction with jnk-1 of the mitogen-activated protein kinase (MAPK) pathway. Involved in increased proteasome activity by activating expression of rpn-6.1 in response to proteotoxic stress, leading to enhanced assembly of the 26S proteasome, followed by higher proteasome activity. Also regulates proteasome activity in the intestine by preventing expression of deubiquitinase ubh-4. Represses transcription of natc-1. Involved in regulation of srh-234 expression. Binds to the promoter of the AMPK-gamma regulatory subunit, aakg-4, and activates its transcription. Also activates transcription of AMPK-gamma regulatory subunit, aakg-1. Maintains endoplasmic reticulum (ER) function by inducing protein degradation and elimination to remove misfolded secretory proteins from the ER independently of the ire-1/xbp-1 unfolded protein response pathway. Regulates epidermal innate immunity to nematophagous fungal infection and physical wounding which trigger bli-3 induced ROS release, leading to daf-16 activation independently of daf-2 signaling. May negatively regulate resistance to stress caused by oxidized cholesterol adducts by preventing the activation of daf-9 and nuclear hormone receptor daf-12, two members of the steroid signaling pathway. Promotes apoptosis during embryonic development. Probably through the regulation of the autophagy genes atg-18 and atg-16.2, plays a role in regulating stem cell number in the germline during larval development. Plays a role in learning and memory; including associative memory, and aversive gustatory associated learning known as salt avoidance learning. Plays a role in regulating gene transcription in response to white light exposure. Binds to the promoter of dex-1 to positively regulate its expression in seam cells during the dauer phase. Plays a role in transgenerational lipid accumulation in response to a high-fat diet. Functionally, functions in the Insulin/IGF-1-like signaling (IIS) mediated pathway. May play a role in lifespan modulation, but less significant than that played by isoforms d and f. Functions in the Insulin/IGF-1-like signaling (IIS) mediated pathway. Transcript level in the early adult may play a role in lifespan modulation, but effect is more significant than that played by isoform a. This chain is Forkhead box protein O, found in Caenorhabditis elegans.